We begin with the raw amino-acid sequence, 209 residues long: Uracil phosphoribosyltransferase (209 aa).

5-phospho-alpha-D-ribose 1-diphosphate contacts are provided by residues Arg79, Arg104, and 131-139 (DPMLATGGS). Residues Val194 and 199-201 (GDA) contribute to the uracil site. Asp200 serves as a coordination point for 5-phospho-alpha-D-ribose 1-diphosphate.

This sequence belongs to the UPRTase family. The cofactor is Mg(2+).

It carries out the reaction UMP + diphosphate = 5-phospho-alpha-D-ribose 1-diphosphate + uracil. It functions in the pathway pyrimidine metabolism; UMP biosynthesis via salvage pathway; UMP from uracil: step 1/1. Allosterically activated by GTP. Catalyzes the conversion of uracil and 5-phospho-alpha-D-ribose 1-diphosphate (PRPP) to UMP and diphosphate. This chain is Uracil phosphoribosyltransferase, found in Clostridium botulinum (strain ATCC 19397 / Type A).